Consider the following 127-residue polypeptide: Large ribosomal subunit protein bL20 (127 aa).

This sequence belongs to the bacterial ribosomal protein bL20 family.

Binds directly to 23S ribosomal RNA and is necessary for the in vitro assembly process of the 50S ribosomal subunit. It is not involved in the protein synthesizing functions of that subunit. This chain is Large ribosomal subunit protein bL20, found in Renibacterium salmoninarum (strain ATCC 33209 / DSM 20767 / JCM 11484 / NBRC 15589 / NCIMB 2235).